A 235-amino-acid chain; its full sequence is tRNA (guanine-N(7)-)-methyltransferase (235 aa).

Residues glycine 60, 83-84 (EI), 116-117 (NA), and leucine 136 contribute to the S-adenosyl-L-methionine site. Aspartate 139 is a catalytic residue. 214-216 (SEE) contributes to the S-adenosyl-L-methionine binding site.

Belongs to the class I-like SAM-binding methyltransferase superfamily. TrmB family.

It is found in the nucleus. The enzyme catalyses guanosine(46) in tRNA + S-adenosyl-L-methionine = N(7)-methylguanosine(46) in tRNA + S-adenosyl-L-homocysteine. It functions in the pathway tRNA modification; N(7)-methylguanine-tRNA biosynthesis. Its function is as follows. Catalyzes the formation of N(7)-methylguanine at position 46 (m7G46) in tRNA. This Anopheles gambiae (African malaria mosquito) protein is tRNA (guanine-N(7)-)-methyltransferase.